The sequence spans 282 residues: MSIFLVKAPAKVNLFLHITGKRIDQHHYLESLFVFVNVYDLLEVNIDGRKRGVYFSNFKISKYNNTVYKAIELLLKHSSVRPNISVNVIKNILVSAGLAGGSADAAAIIRLLGNMWNIDCKLLQDLALKVGSDVPACLESKTLFAKGVGEDILLLPDLLLPRYIILVAPRGKSLSTAKVFNHYKCDNFSASICDKLPVKQDDWMELIYNSKNDLLDVALNFVPEIEEILFVLKKLKNVFIARMTGSGATCFALFHELSHAENAAKHLRMTRPDWVIFNAKIL.

Residue K11 is part of the active site. An ATP-binding site is contributed by 93 to 103 (LVSAGLAGGSA). D133 is an active-site residue.

Belongs to the GHMP kinase family. IspE subfamily.

The catalysed reaction is 4-CDP-2-C-methyl-D-erythritol + ATP = 4-CDP-2-C-methyl-D-erythritol 2-phosphate + ADP + H(+). The protein operates within isoprenoid biosynthesis; isopentenyl diphosphate biosynthesis via DXP pathway; isopentenyl diphosphate from 1-deoxy-D-xylulose 5-phosphate: step 3/6. In terms of biological role, catalyzes the phosphorylation of the position 2 hydroxy group of 4-diphosphocytidyl-2C-methyl-D-erythritol. The sequence is that of 4-diphosphocytidyl-2-C-methyl-D-erythritol kinase from Ehrlichia canis (strain Jake).